A 136-amino-acid chain; its full sequence is Protein PsiE (136 aa).

A run of 4 helical transmembrane segments spans residues 15–35 (ILQNVLNLGLLTLGLILVLFL), 55–75 (YELVEGLVIYFLYFEFIALIV), 82–102 (FHFPLRYFVYIGITAIVRLII), and 108–128 (PMDVLLYSAAILLLVITLWLC).

The protein belongs to the PsiE family.

The protein resides in the cell inner membrane. This Salmonella arizonae (strain ATCC BAA-731 / CDC346-86 / RSK2980) protein is Protein PsiE.